The sequence spans 90 residues: MLDSIPLFPGLPGGPELLIVLLIVVLLFGANKLPQLARSSGQAMGEFRRGREEIEEELKKGAEGGDDEGENGDEAEADDADATETEAESR.

Residues 8-28 traverse the membrane as a helical segment; sequence FPGLPGGPELLIVLLIVVLLF. The disordered stretch occupies residues 39–90; the sequence is SSGQAMGEFRRGREEIEEELKKGAEGGDDEGENGDEAEADDADATETEAESR. Over residues 46 to 63 the composition is skewed to basic and acidic residues; the sequence is EFRRGREEIEEELKKGAE. Residues 64-90 show a composition bias toward acidic residues; it reads GGDDEGENGDEAEADDADATETEAESR.

The protein belongs to the TatA/E family. Forms a complex with TatC. Cytoplasmic and membrane-bound TatA form high-molecular-weight complexes.

It is found in the cell membrane. The protein resides in the cytoplasm. Its function is as follows. Part of the twin-arginine translocation (Tat) system that transports large folded proteins containing a characteristic twin-arginine motif in their signal peptide across membranes. TatA could form the protein-conducting channel of the Tat system. In Haloferax volcanii (strain ATCC 29605 / DSM 3757 / JCM 8879 / NBRC 14742 / NCIMB 2012 / VKM B-1768 / DS2) (Halobacterium volcanii), this protein is Sec-independent protein translocase protein TatAo.